A 161-amino-acid chain; its full sequence is Troponin C, slow skeletal and cardiac muscles (161 aa).

M1 carries the post-translational modification N-acetylmethionine. 4 EF-hand domains span residues 16 to 51, 52 to 87, 92 to 127, and 128 to 161; these read QKNE…LGQN, PTPE…CMKD, KSEE…TGET, and ITED…KGVE. Ca(2+) is bound by residues D65, D67, S69, T71, and E76. S98 is subject to Phosphoserine. 10 residues coordinate Ca(2+): D105, N107, D109, Y111, E116, D141, N143, D145, R147, and E152.

Belongs to the troponin C family.

Troponin is the central regulatory protein of striated muscle contraction. Tn consists of three components: Tn-I which is the inhibitor of actomyosin ATPase, Tn-T which contains the binding site for tropomyosin and Tn-C. The binding of calcium to Tn-C abolishes the inhibitory action of Tn on actin filaments. This chain is Troponin C, slow skeletal and cardiac muscles (TNNC1), found in Homo sapiens (Human).